Consider the following 225-residue polypeptide: Histone-arginine methyltransferase METTL23 (225 aa).

The protein belongs to the methyltransferase superfamily. METTL23 family. In terms of assembly, interacts with HSPA5, HSP90B1, TUBULIN, UGGT1 and UGGT2. Interacts with TET3. Interacts with STPG4.

The protein resides in the nucleus. Its subcellular location is the cytoplasm. It carries out the reaction L-arginyl-[protein] + 2 S-adenosyl-L-methionine = N(omega),N(omega)-dimethyl-L-arginyl-[protein] + 2 S-adenosyl-L-homocysteine + 2 H(+). Functionally, histone methyltransferase that dimethylates histone H3 at 'Arg-17', forming asymmetric dimethylarginine (H3R17me2a), leading to activate transcription via chromatin remodeling. Maternal factor involved in epigenetic chromatin reprogramming of the paternal genome in the zygote: mediates H3R17me2a, promoting histone H3.3 incorporation in the male pronucleus, leading to TET3 recruitment and subsequent DNA demethylation. This chain is Histone-arginine methyltransferase METTL23, found in Rattus norvegicus (Rat).